The sequence spans 872 residues: DNA mismatch repair protein MutS (872 aa).

A compositionally biased stretch (polar residues) spans 1-17 (MSISKIESVNAEKQSPV). The interval 1 to 22 (MSISKIESVNAEKQSPVGTEIG) is disordered. Position 632-639 (632-639 (GPNMGGKS)) interacts with ATP.

Belongs to the DNA mismatch repair MutS family.

Its function is as follows. This protein is involved in the repair of mismatches in DNA. It is possible that it carries out the mismatch recognition step. This protein has a weak ATPase activity. This Azoarcus sp. (strain BH72) protein is DNA mismatch repair protein MutS.